The primary structure comprises 56 residues: Ribosome modulation factor (56 aa).

The protein belongs to the ribosome modulation factor family.

The protein localises to the cytoplasm. Functionally, during stationary phase, converts 70S ribosomes to an inactive dimeric form (100S ribosomes). In Proteus mirabilis (strain HI4320), this protein is Ribosome modulation factor.